The primary structure comprises 244 residues: Tetraspanin-7 (244 aa).

Topologically, residues 1–11 (METKPVITCLK) are cytoplasmic. A helical transmembrane segment spans residues 12–35 (TLLIIYSFVFWITGVILLAVGVWG). Residues 36–51 (KLTLGTYISLIAENST) are Extracellular-facing. Asn49 carries N-linked (GlcNAc...) asparagine glycosylation. A helical membrane pass occupies residues 52 to 70 (NAPYVLIGTGTTIVVFGLF). Residues 71–81 (GCFATCRGSPW) are Cytoplasmic-facing. A helical membrane pass occupies residues 82–107 (MLKLYAMFLSLVFLAELVAGISGFVF). At 108 to 208 (RHEIKDTFLR…LVTSFMETNM (101 aa)) the chain is on the extracellular side. Asn150, Asn153, Asn172, and Asn183 each carry an N-linked (GlcNAc...) asparagine glycan. A helical transmembrane segment spans residues 209-229 (GIIAGVAFGIAFSQLIGMLLA). The Cytoplasmic segment spans residues 230–244 (CCLSRFITANQYEMV).

It belongs to the tetraspanin (TM4SF) family.

The protein localises to the membrane. In terms of biological role, may be involved in cell proliferation and cell motility. This chain is Tetraspanin-7 (TSPAN7), found in Pan troglodytes (Chimpanzee).